Reading from the N-terminus, the 600-residue chain is Elongation factor 4 (600 aa).

A tr-type G domain is found at 5–187 (KYIRNFSIIA…AIVNKLPPPK (183 aa)). Residues 17–22 (DHGKST) and 134–137 (NKID) contribute to the GTP site.

The protein belongs to the TRAFAC class translation factor GTPase superfamily. Classic translation factor GTPase family. LepA subfamily.

It is found in the cell inner membrane. It catalyses the reaction GTP + H2O = GDP + phosphate + H(+). In terms of biological role, required for accurate and efficient protein synthesis under certain stress conditions. May act as a fidelity factor of the translation reaction, by catalyzing a one-codon backward translocation of tRNAs on improperly translocated ribosomes. Back-translocation proceeds from a post-translocation (POST) complex to a pre-translocation (PRE) complex, thus giving elongation factor G a second chance to translocate the tRNAs correctly. Binds to ribosomes in a GTP-dependent manner. In Rickettsia canadensis (strain McKiel), this protein is Elongation factor 4.